The chain runs to 152 residues: MEDFKYRNYYVLRVTGGQEINVALILEERIKTNNINEIFSVVVPPNIKGYVILEATGPHVVKLISSGIRHVKGVAHGLIQKEDVTKFVSKSVALPAVKEGDLVEVISGPFRGMQAQVVRVESTKNEVVLNILESSYPVQVTVPLEQVKPVKR.

The KOW domain occupies 99–129; that stretch reads EGDLVEVISGPFRGMQAQVVRVESTKNEVVL.

The protein belongs to the archaeal Spt5 family. Heterodimer composed of Spt4 and Spt5. Interacts with RNA polymerase (RNAP).

In terms of biological role, stimulates transcription elongation. The sequence is that of Transcription elongation factor Spt5 from Sulfolobus acidocaldarius (strain ATCC 33909 / DSM 639 / JCM 8929 / NBRC 15157 / NCIMB 11770).